The chain runs to 637 residues: uncharacterized protein (637 aa).

The zn(2)-C6 fungal-type DNA-binding region spans cysteine 7 to cysteine 34. Residues serine 304–serine 327 form a C2H2-type; degenerate zinc finger.

It is found in the nucleus. This is an uncharacterized protein from Schizosaccharomyces pombe (strain 972 / ATCC 24843) (Fission yeast).